We begin with the raw amino-acid sequence, 207 residues long: ATP synthase subunit b 2 (207 aa).

Residues 53–72 (TYASQLLWLVITFSVFYLLM) form a helical membrane-spanning segment.

It belongs to the ATPase B chain family. F-type ATPases have 2 components, F(1) - the catalytic core - and F(0) - the membrane proton channel. F(1) has five subunits: alpha(3), beta(3), gamma(1), delta(1), epsilon(1). F(0) has three main subunits: a(1), b(2) and c(10-14). The alpha and beta chains form an alternating ring which encloses part of the gamma chain. F(1) is attached to F(0) by a central stalk formed by the gamma and epsilon chains, while a peripheral stalk is formed by the delta and b chains.

The protein resides in the cell inner membrane. In terms of biological role, f(1)F(0) ATP synthase produces ATP from ADP in the presence of a proton or sodium gradient. F-type ATPases consist of two structural domains, F(1) containing the extramembraneous catalytic core and F(0) containing the membrane proton channel, linked together by a central stalk and a peripheral stalk. During catalysis, ATP synthesis in the catalytic domain of F(1) is coupled via a rotary mechanism of the central stalk subunits to proton translocation. Functionally, component of the F(0) channel, it forms part of the peripheral stalk, linking F(1) to F(0). The b'-subunit is a diverged and duplicated form of b found in plants and photosynthetic bacteria. The chain is ATP synthase subunit b 2 (atpF2) from Rhizobium leguminosarum bv. trifolii (strain WSM2304).